A 282-amino-acid chain; its full sequence is 4-diphosphocytidyl-2-C-methyl-D-erythritol kinase (282 aa).

Lysine 11 is an active-site residue. ATP is bound at residue 95–105; sequence PMGGGVGGGSS. Aspartate 137 is a catalytic residue.

Belongs to the GHMP kinase family. IspE subfamily.

The catalysed reaction is 4-CDP-2-C-methyl-D-erythritol + ATP = 4-CDP-2-C-methyl-D-erythritol 2-phosphate + ADP + H(+). The protein operates within isoprenoid biosynthesis; isopentenyl diphosphate biosynthesis via DXP pathway; isopentenyl diphosphate from 1-deoxy-D-xylulose 5-phosphate: step 3/6. Functionally, catalyzes the phosphorylation of the position 2 hydroxy group of 4-diphosphocytidyl-2C-methyl-D-erythritol. The sequence is that of 4-diphosphocytidyl-2-C-methyl-D-erythritol kinase from Haemophilus ducreyi (strain 35000HP / ATCC 700724).